A 557-amino-acid chain; its full sequence is Dihydroxy-acid dehydratase (557 aa).

Cysteine 50 contacts [2Fe-2S] cluster. Aspartate 82 is a Mg(2+) binding site. [2Fe-2S] cluster is bound at residue cysteine 123. Mg(2+)-binding residues include aspartate 124 and lysine 125. Lysine 125 is modified (N6-carboxylysine). Cysteine 195 contacts [2Fe-2S] cluster. Glutamate 447 serves as a coordination point for Mg(2+). Serine 473 acts as the Proton acceptor in catalysis.

Belongs to the IlvD/Edd family. As to quaternary structure, homodimer. [2Fe-2S] cluster is required as a cofactor. It depends on Mg(2+) as a cofactor.

The enzyme catalyses (2R)-2,3-dihydroxy-3-methylbutanoate = 3-methyl-2-oxobutanoate + H2O. The catalysed reaction is (2R,3R)-2,3-dihydroxy-3-methylpentanoate = (S)-3-methyl-2-oxopentanoate + H2O. Its pathway is amino-acid biosynthesis; L-isoleucine biosynthesis; L-isoleucine from 2-oxobutanoate: step 3/4. It functions in the pathway amino-acid biosynthesis; L-valine biosynthesis; L-valine from pyruvate: step 3/4. In terms of biological role, functions in the biosynthesis of branched-chain amino acids. Catalyzes the dehydration of (2R,3R)-2,3-dihydroxy-3-methylpentanoate (2,3-dihydroxy-3-methylvalerate) into 2-oxo-3-methylpentanoate (2-oxo-3-methylvalerate) and of (2R)-2,3-dihydroxy-3-methylbutanoate (2,3-dihydroxyisovalerate) into 2-oxo-3-methylbutanoate (2-oxoisovalerate), the penultimate precursor to L-isoleucine and L-valine, respectively. This chain is Dihydroxy-acid dehydratase, found in Janthinobacterium sp. (strain Marseille) (Minibacterium massiliensis).